Reading from the N-terminus, the 128-residue chain is Insulin-like 3 (128 aa).

The first 15 residues, 1 to 15, serve as a signal peptide directing secretion; it reads MHALLLLLLLALGSA. 3 cysteine pairs are disulfide-bonded: C29–C113, C41–C126, and C112–C117. Over residues 81–94 the composition is skewed to low complexity; that stretch reads ALDPDPALDPQLPH. Positions 81–101 are disordered; it reads ALDPDPALDPQLPHQASQRQR.

This sequence belongs to the insulin family. In terms of assembly, heterodimer of a B chain and an A chain linked by two disulfide bonds. Expressed in Leydig cells of the testis, and weakly in the theca interna cells of antral follicles and the corpus luteum of the ovary.

Its subcellular location is the secreted. In terms of biological role, seems to play a role in testicular function. May be a trophic hormone with a role in testicular descent in fetal life. Is a ligand for LGR8 receptor. In Rattus norvegicus (Rat), this protein is Insulin-like 3 (Insl3).